We begin with the raw amino-acid sequence, 583 residues long: uncharacterized protein (583 aa).

24 to 140 (ILADIDDEQL…SAMLRAMARM (117 aa)) serves as a coordination point for a nucleoside 3',5'-cyclic phosphate. The PNPLA domain maps to 309-469 (LVMAGGGARG…LNNLPANVMC (161 aa)). The GXGXXG signature appears at 313 to 318 (GGGARG). Positions 340–344 (GTSSG) match the GXSXG motif. Ser342 acts as the Nucleophile in catalysis. The active-site Proton acceptor is Asp456. Residues 456 to 458 (DGG) carry the DGA/G motif.

It belongs to the NTE family.

This is an uncharacterized protein from Mycobacterium tuberculosis (strain CDC 1551 / Oshkosh).